We begin with the raw amino-acid sequence, 268 residues long: MKRVALLVQYDGYHYSGWQKQKNATTVQEILESALFKITNHTVKTFAAGRTDAGVHASGQVVHFDIDSVIPGFSYSNILNNLLPSTIRILESVEVKNSWHACYSAVYRHYRYVINNGKFPNLFINNWSWHRYQKVLDEVLMLHASKTMEGEHDFFAFQKSGSNRRNSVTLIKNIDIKRVEDLILVDIKATGFLYGMVRLIVGQLVLVGEKKISSDIFIDRWVNKKKNDVKESAPAKGLCFVNAVYEENVFKKVNNNDFFPLFLINGFS.

The active-site Nucleophile is Asp-52. Position 110 (Tyr-110) interacts with substrate.

Belongs to the tRNA pseudouridine synthase TruA family. In terms of assembly, homodimer.

The enzyme catalyses uridine(38/39/40) in tRNA = pseudouridine(38/39/40) in tRNA. In terms of biological role, formation of pseudouridine at positions 38, 39 and 40 in the anticodon stem and loop of transfer RNAs. The chain is tRNA pseudouridine synthase A from Prochlorococcus marinus (strain MIT 9215).